We begin with the raw amino-acid sequence, 256 residues long: Pimeloyl-[acyl-carrier protein] methyl ester esterase (256 aa).

Residues 15–242 enclose the AB hydrolase-1 domain; the sequence is HLVLLHGWGL…AAHAPFISHP (228 aa). Substrate is bound by residues tryptophan 22, 82–83, and 143–147; these read SL and FLALQ. Serine 82 (nucleophile) is an active-site residue. Active-site residues include aspartate 207 and histidine 235. Substrate is bound at residue histidine 235.

It belongs to the AB hydrolase superfamily. Carboxylesterase BioH family. Monomer.

It localises to the cytoplasm. The catalysed reaction is 6-carboxyhexanoyl-[ACP] methyl ester + H2O = 6-carboxyhexanoyl-[ACP] + methanol + H(+). It functions in the pathway cofactor biosynthesis; biotin biosynthesis. Its function is as follows. The physiological role of BioH is to remove the methyl group introduced by BioC when the pimeloyl moiety is complete. It allows to synthesize pimeloyl-ACP via the fatty acid synthetic pathway through the hydrolysis of the ester bonds of pimeloyl-ACP esters. The protein is Pimeloyl-[acyl-carrier protein] methyl ester esterase of Shigella dysenteriae serotype 1 (strain Sd197).